The following is a 507-amino-acid chain: ATP-dependent RNA helicase DDX47 (507 aa).

Residues methionine 1–aspartate 31 show a composition bias toward acidic residues. A disordered region spans residues methionine 1–glutamate 58. Positions leucine 61–arginine 89 match the Q motif motif. The Helicase ATP-binding domain occupies isoleucine 92 to valine 263. Alanine 105–threonine 112 serves as a coordination point for ATP. The DEAD box motif lies at aspartate 211–aspartate 214. The region spanning tyrosine 290 to methionine 434 is the Helicase C-terminal domain. Residues tyrosine 426–aspartate 453 adopt a coiled-coil conformation. The segment covering leucine 451–serine 471 has biased composition (basic and acidic residues). Residues leucine 451 to arginine 507 are disordered. Over residues serine 494–arginine 507 the composition is skewed to basic residues.

The protein belongs to the DEAD box helicase family. DDX47/RRP3 subfamily.

It localises to the nucleus. Its subcellular location is the nucleolus. It carries out the reaction ATP + H2O = ADP + phosphate + H(+). Part of a translational control module, also containing ath/DHX33 and ais/DDX52, which coordinates germline stem cell differentiation with ribosome biogenesis during oogenesis. This module allows for coregulation of ribosomal proteins and non1/GTPBP4, a p53 repressor, preventing p53 stabilization, cell cycle arrest and loss of stem cell differentiation. With atos, adjusts transcription and translation of a subset of OXPHOS genes in macrophages to increase mitochondrial bioenergetics and allow tissue invasion. The polypeptide is ATP-dependent RNA helicase DDX47 (Drosophila melanogaster (Fruit fly)).